The following is a 197-amino-acid chain: tRNA(Phe) 7-((3-amino-3-carboxypropyl)-4-demethylwyosine(37)-N(4))-methyltransferase (197 aa).

The protein belongs to the TYW3 family.

It catalyses the reaction 4-demethyl-7-[(3S)-3-amino-3-carboxypropyl]wyosine(37) in tRNA(Phe) + S-adenosyl-L-methionine = 7-[(3S)-3-amino-3-carboxypropyl]wyosine(37) in tRNA(Phe) + S-adenosyl-L-homocysteine + H(+). In terms of biological role, S-adenosyl-L-methionine-dependent methyltransferase that acts as a component of the wyosine derivatives biosynthesis pathway. Probably methylates N-4 position of wybutosine-86 to produce wybutosine-72. This Thermococcus sibiricus (strain DSM 12597 / MM 739) protein is tRNA(Phe) 7-((3-amino-3-carboxypropyl)-4-demethylwyosine(37)-N(4))-methyltransferase.